Here is a 142-residue protein sequence, read N- to C-terminus: Putative pre-16S rRNA nuclease (142 aa).

The protein belongs to the YqgF nuclease family.

The protein resides in the cytoplasm. Its function is as follows. Could be a nuclease involved in processing of the 5'-end of pre-16S rRNA. This Prosthecochloris aestuarii (strain DSM 271 / SK 413) protein is Putative pre-16S rRNA nuclease.